The sequence spans 320 residues: Glycerol-3-phosphate dehydrogenase [NAD(P)+] (320 aa).

NADPH contacts are provided by S14, F15, R35, and K109. Sn-glycerol 3-phosphate-binding residues include K109 and G137. A141 contributes to the NADPH binding site. Sn-glycerol 3-phosphate contacts are provided by K192, D248, S258, R259, and N260. K192 functions as the Proton acceptor in the catalytic mechanism. R259 provides a ligand contact to NADPH. The NADPH site is built by L283 and E285.

It belongs to the NAD-dependent glycerol-3-phosphate dehydrogenase family.

The protein localises to the cytoplasm. The catalysed reaction is sn-glycerol 3-phosphate + NAD(+) = dihydroxyacetone phosphate + NADH + H(+). It carries out the reaction sn-glycerol 3-phosphate + NADP(+) = dihydroxyacetone phosphate + NADPH + H(+). It functions in the pathway membrane lipid metabolism; glycerophospholipid metabolism. In terms of biological role, catalyzes the reduction of the glycolytic intermediate dihydroxyacetone phosphate (DHAP) to sn-glycerol 3-phosphate (G3P), the key precursor for phospholipid synthesis. This Rickettsia typhi (strain ATCC VR-144 / Wilmington) protein is Glycerol-3-phosphate dehydrogenase [NAD(P)+].